Reading from the N-terminus, the 193-residue chain is 3-isopropylmalate dehydratase small subunit (193 aa).

This sequence belongs to the LeuD family. LeuD type 1 subfamily. As to quaternary structure, heterodimer of LeuC and LeuD.

It carries out the reaction (2R,3S)-3-isopropylmalate = (2S)-2-isopropylmalate. The protein operates within amino-acid biosynthesis; L-leucine biosynthesis; L-leucine from 3-methyl-2-oxobutanoate: step 2/4. Catalyzes the isomerization between 2-isopropylmalate and 3-isopropylmalate, via the formation of 2-isopropylmaleate. In Bacillus anthracis (strain CDC 684 / NRRL 3495), this protein is 3-isopropylmalate dehydratase small subunit.